A 448-amino-acid polypeptide reads, in one-letter code: uncharacterized protein (448 aa).

The Extracellular portion of the chain corresponds to 1–50 (MAPEIFVKFKCASRDIKLLWASVFLRLLSYGLTNQVLTLFLNAINMTEDK). Residues 51–71 (IGLFMSLTLAGDVICSYILTW) traverse the membrane as a helical segment. The Cytoplasmic segment spans residues 72-93 (YADSWGRRRVLVYGCAMMLLSG). A helical membrane pass occupies residues 94–114 (LVFSFSENFTLLLVFAIFGVI). The Extracellular portion of the chain corresponds to 115–146 (SPSSDEVGPFKSIEEAMIAHLSPHNARPEIYA). The helical transmembrane segment at 147–167 (IHALVGTIGSALGAIICGIFV) threads the bilayer. The Cytoplasmic segment spans residues 168-184 (DLLKRTGLAATDLQCYK). Residues 185-205 (LVFLLYAFFAFCKMVIMLLLS) form a helical membrane-spanning segment. Residues 206-260 (DATELDGHYEHTDCNEETAEPLDVNDETAPLMRQATHPEERSNKLSKETVSVLMK) lie on the Extracellular side of the membrane. The helical transmembrane segment at 261–281 (LLVIFMVDSLGSGFMTSGWMV) threads the bilayer. Topologically, residues 282–287 (YYYSKQ) are cytoplasmic. A helical membrane pass occupies residues 288–308 (FLMGSLALGTLFFITQLVMAS). Over 309 to 333 (STIPSSIIARCFGPVRATLLVQIPS) the chain is Extracellular. The chain crosses the membrane as a helical span at residues 334–354 (GIFSILIPMAKNYLPLSILFL). Topologically, residues 355–386 (NLHFATTAMDVTPRQILLTNIIKPRDLTKVMG) are cytoplasmic. 386-393 (GVVNIGKT) provides a ligand contact to ATP. The helical transmembrane segment at 387 to 407 (VVNIGKTFARCVGPIFTGILA) threads the bilayer. Over 408–416 (NNNYLWLCY) the chain is Extracellular. The helical transmembrane segment at 417-437 (IISGSLVITADLILACMFLGV) threads the bilayer. Over 438–448 (DAKIKKQMNRH) the chain is Cytoplasmic.

The protein resides in the membrane. This is an uncharacterized protein from Saccharomyces cerevisiae (strain ATCC 204508 / S288c) (Baker's yeast).